A 384-amino-acid polypeptide reads, in one-letter code: GTPase Obg (384 aa).

The 159-residue stretch at 1-159 (MKFIDEAKIE…RSLQLELKVL (159 aa)) folds into the Obg domain. The disordered stretch occupies residues 20–46 (ATSFRREKFVPRGGPDGGDGGKGGSVW). Residues 33-43 (GPDGGDGGKGG) show a composition bias toward gly residues. Residues 160–348 (ADVGLLGMPN…LVHQINQYLT (189 aa)) form the OBG-type G domain. Residues 166-173 (GMPNAGKS), 191-195 (FTTLH), 213-216 (DIPG), 284-287 (NKLD), and 329-331 (SAL) contribute to the GTP site. Serine 173 and threonine 193 together coordinate Mg(2+).

The protein belongs to the TRAFAC class OBG-HflX-like GTPase superfamily. OBG GTPase family. Monomer. Mg(2+) is required as a cofactor.

It is found in the cytoplasm. An essential GTPase which binds GTP, GDP and possibly (p)ppGpp with moderate affinity, with high nucleotide exchange rates and a fairly low GTP hydrolysis rate. Plays a role in control of the cell cycle, stress response, ribosome biogenesis and in those bacteria that undergo differentiation, in morphogenesis control. This chain is GTPase Obg, found in Neisseria meningitidis serogroup B (strain ATCC BAA-335 / MC58).